We begin with the raw amino-acid sequence, 381 residues long: MRDVSRSIQAQFRGALGRFALDAAFTVPATGITGLFGPSGCGKSTVLRCIAGLQQLPGSTFAIDGDVWQDASQFRQPHQRPIGYVFQEASLFAHLSVKANLLYGAPRDAAHARDSITFDEVIELLGLAALLERSPRHLSGGERQRVAIGRALLSQPKLLLMDEPLSALDRLTKDEILPFLERLHERLALPVIYVSHDMAEIERLADHLVLMRKGQVLAAGPLAALQSDPALPLAASRDAAVNFEATVEDYDPGYGLLTVAVDGGRLLVPAPPAQRGEHRRLRIAAGDVSLARELPHNTSILNVLPARIVSHNPLGDSEILVVLALGGNGEGARLLARVTRRSWDHLELADGIGLIAQVKGVALAPGRNTGTHASSPGLRGR.

One can recognise an ABC transporter domain in the interval Ser-5–Asp-238. Gly-37–Ser-44 provides a ligand contact to ATP. The Mop domain occupies Asn-297 to Arg-367.

Belongs to the ABC transporter superfamily. Molybdate importer (TC 3.A.1.8) family. In terms of assembly, the complex is composed of two ATP-binding proteins (ModC), two transmembrane proteins (ModB) and a solute-binding protein (ModA).

It localises to the cell inner membrane. It carries out the reaction molybdate(out) + ATP + H2O = molybdate(in) + ADP + phosphate + H(+). Part of the ABC transporter complex ModABC involved in molybdenum import. Responsible for energy coupling to the transport system. This is Molybdenum import ATP-binding protein ModC from Rhodopseudomonas palustris (strain BisB18).